We begin with the raw amino-acid sequence, 63 residues long: Large ribosomal subunit protein bL28 (63 aa).

Belongs to the bacterial ribosomal protein bL28 family.

This is Large ribosomal subunit protein bL28 from Geotalea uraniireducens (strain Rf4) (Geobacter uraniireducens).